A 75-amino-acid polypeptide reads, in one-letter code: Small ribosomal subunit protein bS18 (75 aa).

It belongs to the bacterial ribosomal protein bS18 family. In terms of assembly, part of the 30S ribosomal subunit. Forms a tight heterodimer with protein bS6.

Binds as a heterodimer with protein bS6 to the central domain of the 16S rRNA, where it helps stabilize the platform of the 30S subunit. The polypeptide is Small ribosomal subunit protein bS18 (Glaesserella parasuis serovar 5 (strain SH0165) (Haemophilus parasuis)).